The following is a 167-amino-acid chain: Small ribosomal subunit protein uS3m (167 aa).

The transit peptide at 1–35 (MAASVCSGLLGPRVLSWSRELPCAWRALHTSPVCA) directs the protein to the mitochondrion.

It belongs to the universal ribosomal protein uS3 family. As to quaternary structure, component of the mitochondrial small ribosomal subunit (mt-SSU). Mature mammalian 55S mitochondrial ribosomes consist of a small (28S) and a large (39S) subunit. The 28S small subunit contains a 12S ribosomal RNA (12S mt-rRNA) and 30 different proteins. The 39S large subunit contains a 16S rRNA (16S mt-rRNA), a copy of mitochondrial valine transfer RNA (mt-tRNA(Val)), which plays an integral structural role, and 52 different proteins.

The protein localises to the mitochondrion. This chain is Small ribosomal subunit protein uS3m (MRPS24), found in Homo sapiens (Human).